Here is a 155-residue protein sequence, read N- to C-terminus: MKLHELAPNPGARHERKRVGRGIGSGLGKTSGRGHKGQKARSGGGVRPGFEGGQMPLTRRLPKRGFSNAPFKVRYEVVNVADLERFEAGTVVTPELLDETRVCKNATKGVKVLGTGELTKALTVRAHAVSESARQKIEAAGGKVEVIGEATEEVK.

Residues 1 to 63 (MKLHELAPNP…QMPLTRRLPK (63 aa)) form a disordered region. Gly residues-rich tracts occupy residues 21-31 (RGIGSGLGKTS) and 42-52 (SGGGVRPGFEG).

It belongs to the universal ribosomal protein uL15 family. In terms of assembly, part of the 50S ribosomal subunit.

In terms of biological role, binds to the 23S rRNA. This chain is Large ribosomal subunit protein uL15, found in Symbiobacterium thermophilum (strain DSM 24528 / JCM 14929 / IAM 14863 / T).